Reading from the N-terminus, the 313-residue chain is T-box protein 37 (313 aa).

The T-box DNA-binding region spans 19–195; that stretch reads IWEKFYPKTE…HNKFASGFRS (177 aa). The segment at 193-228 is disordered; that stretch reads FRSNGKRRLSSESENSENSPPKRSASAISSLTPPAI.

It localises to the nucleus. Functionally, transcription factor. Required for mesodermal induction, acting redundantly with transcription factor tbx-38. Together with tbx-38, acts by inducing cell fates in the AB lineage, thereby playing a role in development of the anterior pharynx. The protein is T-box protein 37 (tbx-37) of Caenorhabditis elegans.